We begin with the raw amino-acid sequence, 393 residues long: 1-deoxy-D-xylulose 5-phosphate reductoisomerase (393 aa).

NADPH contacts are provided by Thr10, Gly11, Ser12, Ile13, Gln38, and Asn124. Lys125 provides a ligand contact to 1-deoxy-D-xylulose 5-phosphate. Glu126 provides a ligand contact to NADPH. A Mn(2+)-binding site is contributed by Asp150. Residues Ser151, Glu152, Ser179, and His202 each contribute to the 1-deoxy-D-xylulose 5-phosphate site. Glu152 is a Mn(2+) binding site. Residue Gly208 participates in NADPH binding. Residues Ser215, Asn220, Lys221, and Glu224 each contribute to the 1-deoxy-D-xylulose 5-phosphate site. Glu224 is a binding site for Mn(2+).

Belongs to the DXR family. The cofactor is Mg(2+). Requires Mn(2+) as cofactor.

It catalyses the reaction 2-C-methyl-D-erythritol 4-phosphate + NADP(+) = 1-deoxy-D-xylulose 5-phosphate + NADPH + H(+). The protein operates within isoprenoid biosynthesis; isopentenyl diphosphate biosynthesis via DXP pathway; isopentenyl diphosphate from 1-deoxy-D-xylulose 5-phosphate: step 1/6. In terms of biological role, catalyzes the NADPH-dependent rearrangement and reduction of 1-deoxy-D-xylulose-5-phosphate (DXP) to 2-C-methyl-D-erythritol 4-phosphate (MEP). This Ralstonia nicotianae (strain ATCC BAA-1114 / GMI1000) (Ralstonia solanacearum) protein is 1-deoxy-D-xylulose 5-phosphate reductoisomerase.